The chain runs to 382 residues: MAIYTSGTQSDNSEPVGNDPKFYTRPSLGLKLWGPLVPSSDNTTGLWSLVAIQTGLGLFLMQRFRKLGKKWVKRDIADFPSLNRFSTTHGDMYMTRHIPVQFGGTHSFNIRVGTRTGFWYSERFRTIRRVTYLLAGTLILSQSMLEVSRLTLLKYDPWVEEAKSVREKQFFNDIVKYYHEGVDSTKFKAKDELSGQSISLNLPEVKQSIAVARAQAQAENLVTKWFGPLDYKPQSFSEFLDKLEYYLNMTDFLNNLRRQKKNDKINSQLVKLEEENKRNRQRIHTLMAHAPARAIRTNQEVQDIYAIRKVLLHHDTESPNDIPLTEIWAIYNPWTNLALDTALSIKFFPSVIFNEDYYEHQKRLKDSEHVTSIENSEDERKP.

At 1–44 (MAIYTSGTQSDNSEPVGNDPKFYTRPSLGLKLWGPLVPSSDNTT) the chain is on the mitochondrial intermembrane side. A helical transmembrane segment spans residues 45–61 (GLWSLVAIQTGLGLFLM). The Mitochondrial matrix portion of the chain corresponds to 62–129 (QRFRKLGKKW…YSERFRTIRR (68 aa)). Residues 130–146 (VTYLLAGTLILSQSMLE) form a helical membrane-spanning segment. At 147–382 (VSRLTLLKYD…IENSEDERKP (236 aa)) the chain is on the mitochondrial intermembrane side.

It belongs to the MGR1 family. In terms of assembly, component of the mitochondrial inner membrane i-AAA protease complex.

The protein localises to the mitochondrion inner membrane. Functionally, component of the mitochondrial inner membrane i-AAA protease complex required for mitochondrial inner membrane protein turnover. This is Mitochondrial inner membrane i-AAA protease complex subunit MGR1 (MGR1) from Kluyveromyces lactis (strain ATCC 8585 / CBS 2359 / DSM 70799 / NBRC 1267 / NRRL Y-1140 / WM37) (Yeast).